Reading from the N-terminus, the 873-residue chain is Valine--tRNA ligase (873 aa).

A 'HIGH' region motif is present at residues 46–56; sequence PNVTGKLHIGH. The short motif at 525–529 is the 'KMSKS' region element; it reads KMSKS. Position 528 (Lys528) interacts with ATP. Residues 804-873 are a coiled coil; sequence NDDFIDKEKM…ELIQDKLNKM (70 aa).

The protein belongs to the class-I aminoacyl-tRNA synthetase family. ValS type 1 subfamily. Monomer.

Its subcellular location is the cytoplasm. It catalyses the reaction tRNA(Val) + L-valine + ATP = L-valyl-tRNA(Val) + AMP + diphosphate. Functionally, catalyzes the attachment of valine to tRNA(Val). As ValRS can inadvertently accommodate and process structurally similar amino acids such as threonine, to avoid such errors, it has a 'posttransfer' editing activity that hydrolyzes mischarged Thr-tRNA(Val) in a tRNA-dependent manner. The polypeptide is Valine--tRNA ligase (Mesoplasma florum (strain ATCC 33453 / NBRC 100688 / NCTC 11704 / L1) (Acholeplasma florum)).